The sequence spans 208 residues: Ribosome maturation factor RimP (208 aa).

The interval 165-208 (TAQPKKGQRQGKEPAKESGQKKQLAEAAPRSGSKRSERGSEKRK) is disordered. Composition is skewed to basic and acidic residues over residues 174 to 188 (QGKE…KKQL) and 198 to 208 (KRSERGSEKRK).

The protein belongs to the RimP family.

The protein resides in the cytoplasm. In terms of biological role, required for maturation of 30S ribosomal subunits. The polypeptide is Ribosome maturation factor RimP (Sorangium cellulosum (strain So ce56) (Polyangium cellulosum (strain So ce56))).